A 145-amino-acid chain; its full sequence is Large ribosomal subunit protein uL13 (145 aa).

This sequence belongs to the universal ribosomal protein uL13 family. In terms of assembly, part of the 50S ribosomal subunit.

This protein is one of the early assembly proteins of the 50S ribosomal subunit, although it is not seen to bind rRNA by itself. It is important during the early stages of 50S assembly. The sequence is that of Large ribosomal subunit protein uL13 from Geobacillus kaustophilus (strain HTA426).